The sequence spans 690 residues: Xylosyl- and glucuronyltransferase LARGE2 (690 aa).

The Cytoplasmic segment spans residues 1–7 (MLPRGRP). A helical; Signal-anchor for type II membrane protein transmembrane segment spans residues 8–28 (RALGAALLLLLLLVVGFFLFG). The Lumenal portion of the chain corresponds to 29 to 690 (RDPEYGLGTT…TALQQSRSRA (662 aa)). 2 N-linked (GlcNAc...) asparagine glycosylation sites follow: N50 and N77. Residues 67-342 (LHVAIVCAGY…FLGFDGKLLC (276 aa)) are xylosyltransferase activity. Mn(2+)-binding residues include D171 and D173. A glycan (N-linked (GlcNAc...) asparagine) is linked at N201. A glucuronyltransferase activity region spans residues 343 to 686 (RELFGCPNQF…LKYLTALQQS (344 aa)). Positions 491 and 493 each coordinate Mn(2+).

It in the C-terminal section; belongs to the glycosyltransferase 49 family. The protein in the N-terminal section; belongs to the glycosyltransferase 8 family. Interacts with B4GAT1. Mn(2+) is required as a cofactor.

Its subcellular location is the golgi apparatus membrane. It catalyses the reaction 3-O-[beta-D-GlcA-(1-&gt;3)-beta-D-Xyl-(1-&gt;4)-Rib-ol-P-Rib-ol-P-3-beta-D-GalNAc-(1-&gt;3)-beta-D-GlcNAc-(1-&gt;4)-(O-6-P-alpha-D-Man)]-Thr-[protein] + UDP-alpha-D-xylose = 3-O-[alpha-D-Xyl-(1-&gt;3)-beta-D-GlcA-(1-&gt;4)-beta-D-Xyl-(1-&gt;4)-Rib-ol-P-Rib-ol-P-3-beta-D-GalNAc-(1-&gt;3)-beta-D-GlcNAc-(1-&gt;4)-(O-6-P-alpha-D-Man)]-Thr-[protein] + UDP + H(+). It carries out the reaction 3-O-{(1-&gt;[3)-alpha-D-Xyl-(1-&gt;3)-beta-D-GlcA-(1-&gt;](n)-4)-beta-D-Xyl-(1-&gt;4)-Rib-ol-P-Rib-ol-P-3-beta-D-GalNAc-(1-&gt;3)-beta-D-GlcNAc-(1-&gt;4)-O-6-P-alpha-D-Man}-L-Thr-[protein] + UDP-alpha-D-glucuronate = 3-O-{beta-D-GlcA-(1-&gt;[3)-alpha-D-Xyl-(1-&gt;3)-beta-D-GlcA-(1-&gt;](n)-4)-beta-D-Xyl-(1-&gt;4)-Rib-ol-P-Rib-ol-P-3-beta-D-GalNAc-(1-&gt;3)-beta-D-GlcNAc-(1-&gt;4)-O-6-P-alpha-D-Man}-L-Thr-[protein] + UDP + H(+). The enzyme catalyses 3-O-{beta-D-GlcA-(1-&gt;[3)-alpha-D-Xyl-(1-&gt;3)-beta-D-GlcA-(1-&gt;](n)-4)-beta-D-Xyl-(1-&gt;4)-Rib-ol-P-Rib-ol-P-3-beta-D-GalNAc-(1-&gt;3)-beta-D-GlcNAc-(1-&gt;4)-O-6-P-alpha-D-Man}-L-Thr-[protein] + UDP-alpha-D-xylose = 3-O-{(1-&gt;[3)-alpha-D-Xyl-(1-&gt;3)-beta-D-GlcA-(1-&gt;](n+1)-4)-beta-D-Xyl-(1-&gt;4)-Rib-ol-P-Rib-ol-P-3-beta-D-GalNAc-(1-&gt;3)-beta-D-GlcNAc-(1-&gt;4)-O-6-P-alpha-D-Man}-L-Thr-[protein] + UDP + H(+). It participates in protein modification; protein glycosylation. Bifunctional glycosyltransferase with both alpha-1,3-xylosyltransferase and beta-1,3-glucuronyltransferase activities involved in the maturation of alpha-dystroglycan (DAG1) by glycosylation leading to DAG1 binding to laminin G-like domain-containing extracellular proteins with high affinity and in a phosphorylated-O-mannosyl trisaccharide dependent manner. Elongates the glucuronyl-beta-1,4-xylose-beta disaccharide primer structure by adding repeating units [-3-Xylose-alpha-1,3-GlcA-beta-1-] to produce a heteropolysaccharide. Supports the maturation of DAG1 more effectively than LARGE1. In addition, can modify both heparan sulfate (HS)- and chondroitin/dermatan sulfate (CS/DS)-proteoglycans (PGs), namely GPC4, with a glycosaminoglycan (GAG)-like polysaccharide composed of xylose and glucuronic acid to confer laminin binding. In Rattus norvegicus (Rat), this protein is Xylosyl- and glucuronyltransferase LARGE2.